Reading from the N-terminus, the 156-residue chain is Protein OXIDATIVE STRESS 3 LIKE 3 (156 aa).

The disordered stretch occupies residues 1–67 (MHYQEQMESL…GLSKHYKGKS (67 aa)). Basic and acidic residues predominate over residues 13–26 (GEERRRGNYTRDVD).

The protein resides in the nucleus. Its function is as follows. Promotes slightly the tolerance to oxidizing chemicals (e.g. diamide). The polypeptide is Protein OXIDATIVE STRESS 3 LIKE 3 (Arabidopsis thaliana (Mouse-ear cress)).